Consider the following 403-residue polypeptide: Chorismate synthase (403 aa).

Positions 40 and 46 each coordinate NADP(+). FMN contacts are provided by residues 140-142 (RSS), 261-262 (QA), Gly305, 320-324 (KPIST), and Arg346.

The protein belongs to the chorismate synthase family. Homotetramer. FMNH2 is required as a cofactor.

It carries out the reaction 5-O-(1-carboxyvinyl)-3-phosphoshikimate = chorismate + phosphate. It functions in the pathway metabolic intermediate biosynthesis; chorismate biosynthesis; chorismate from D-erythrose 4-phosphate and phosphoenolpyruvate: step 7/7. Functionally, catalyzes the anti-1,4-elimination of the C-3 phosphate and the C-6 proR hydrogen from 5-enolpyruvylshikimate-3-phosphate (EPSP) to yield chorismate, which is the branch point compound that serves as the starting substrate for the three terminal pathways of aromatic amino acid biosynthesis. This reaction introduces a second double bond into the aromatic ring system. The polypeptide is Chorismate synthase (Corynebacterium diphtheriae (strain ATCC 700971 / NCTC 13129 / Biotype gravis)).